The following is a 376-amino-acid chain: Na(+)/H(+) antiporter NhaA (376 aa).

11 helical membrane-spanning segments follow: residues 8–28 (FLAT…AAML), 49–69 (LSLL…LVGL), 87–107 (ILPC…YLAF), 117–137 (GWAI…ALLG), 140–160 (APAS…MGAV), 162–182 (IIAL…AIVI), 209–229 (LAVL…ALAI), 248–268 (PWVA…VSFA), 270–290 (IGAE…LFLG), 321–341 (GVAL…GLAF), and 349–369 (EVKI…YALL).

The protein belongs to the NhaA Na(+)/H(+) (TC 2.A.33) antiporter family.

Its subcellular location is the cell inner membrane. It carries out the reaction Na(+)(in) + 2 H(+)(out) = Na(+)(out) + 2 H(+)(in). In terms of biological role, na(+)/H(+) antiporter that extrudes sodium in exchange for external protons. In Rhizorhabdus wittichii (strain DSM 6014 / CCUG 31198 / JCM 15750 / NBRC 105917 / EY 4224 / RW1) (Sphingomonas wittichii), this protein is Na(+)/H(+) antiporter NhaA.